Consider the following 88-residue polypeptide: Large ribosomal subunit protein bL27 (88 aa).

Residues 1 to 13 show a composition bias toward polar residues; the sequence is MATKKGASSSSNG. The disordered stretch occupies residues 1 to 25; that stretch reads MATKKGASSSSNGRDSEAKRLGVKR.

The protein belongs to the bacterial ribosomal protein bL27 family.

This is Large ribosomal subunit protein bL27 from Corynebacterium efficiens (strain DSM 44549 / YS-314 / AJ 12310 / JCM 11189 / NBRC 100395).